The chain runs to 196 residues: DnaA initiator-associating protein DiaA (196 aa).

Residues 34 to 196 (MVQSLLNGNK…DNTLFPHQND (163 aa)) enclose the SIS domain.

Belongs to the SIS family. DiaA subfamily. In terms of assembly, homotetramer; dimer of dimers.

In terms of biological role, required for the timely initiation of chromosomal replication via direct interactions with the DnaA initiator protein. In Pectobacterium atrosepticum (strain SCRI 1043 / ATCC BAA-672) (Erwinia carotovora subsp. atroseptica), this protein is DnaA initiator-associating protein DiaA.